The following is a 431-amino-acid chain: Histidinol dehydrogenase (431 aa).

3 residues coordinate NAD(+): Tyr124, Gln187, and Asn210. Substrate-binding residues include Ser236, Gln258, and His261. Positions 258 and 261 each coordinate Zn(2+). Active-site proton acceptor residues include Glu325 and His326. Substrate-binding residues include His326, Asp359, Glu413, and His418. A Zn(2+)-binding site is contributed by Asp359. Residue His418 participates in Zn(2+) binding.

It belongs to the histidinol dehydrogenase family. Requires Zn(2+) as cofactor.

The catalysed reaction is L-histidinol + 2 NAD(+) + H2O = L-histidine + 2 NADH + 3 H(+). It functions in the pathway amino-acid biosynthesis; L-histidine biosynthesis; L-histidine from 5-phospho-alpha-D-ribose 1-diphosphate: step 9/9. Its function is as follows. Catalyzes the sequential NAD-dependent oxidations of L-histidinol to L-histidinaldehyde and then to L-histidine. The chain is Histidinol dehydrogenase from Legionella pneumophila (strain Lens).